The following is a 62-amino-acid chain: Toxin Tb2-II (62 aa).

Residues 1–62 form the LCN-type CS-alpha/beta domain; it reads KEGYAMDHEG…KVWDYATNKC (62 aa). Intrachain disulfides connect Cys-11-Cys-62, Cys-15-Cys-38, Cys-23-Cys-43, and Cys-27-Cys-45.

This sequence belongs to the long (4 C-C) scorpion toxin superfamily. Sodium channel inhibitor family. Beta subfamily. Expressed by the venom gland.

It is found in the secreted. Its function is as follows. Beta toxins bind voltage-independently at site-4 of sodium channels (Nav) and shift the voltage of activation toward more negative potentials thereby affecting sodium channel activation and promoting spontaneous and repetitive firing. This toxin is active against both mammals and insects. The sequence is that of Toxin Tb2-II from Tityus bahiensis (Brazilian scorpion).